Here is a 487-residue protein sequence, read N- to C-terminus: MRRGERRDAGGPRPESPVPAGRASLEEPPDGPSAGQATGPGEGRRSTESEVYDDGTNTFFWRAHTLTVLFILTCTLGYVTLLEETPQDTAYNTKRGIVASILVFLCFGVTQAKDGPFSRPHPAYWRFWLCVSVVYELFLIFILFQTVQDGRQFLKYVDPKLGVPLPERDYGGNCLIYDPDNETDPFHNIWDKLDGFVPAHFLGWYLKTLMIRDWWMCMIISVMFEFLEYSLEHQLPNFSECWWDHWIMDVLVCNGLGIYCGMKTLEWLSLKTYKWQGLWNIPTYKGKMKRIAFQFTPYSWVRFEWKPASSLRRWLAVCGIILVFLLAELNTFYLKFVLWMPPEHYLVLLRLVFFVNVGGVAMREIYDFMDDPKPHKKLGPQAWLVAAITATELLIVVKYDPHTLTLSLPFYISQCWTLGSVLALTWTVWRFFLRDITLRYKETRWQKWQNKDDQGSTVGNGDQHPLGLDEDLLGPGVAEGEGAPTPN.

Positions 1–10 (MRRGERRDAG) are enriched in basic and acidic residues. A disordered region spans residues 1-50 (MRRGERRDAGGPRPESPVPAGRASLEEPPDGPSAGQATGPGEGRRSTESE). Topologically, residues 1 to 62 (MRRGERRDAG…DDGTNTFFWR (62 aa)) are cytoplasmic. Ser16 and Ser24 each carry phosphoserine. The chain crosses the membrane as a helical span at residues 63-83 (AHTLTVLFILTCTLGYVTLLE). Over 84 to 96 (ETPQDTAYNTKRG) the chain is Lumenal. Residues 97–117 (IVASILVFLCFGVTQAKDGPF) traverse the membrane as a helical segment. At 118-126 (SRPHPAYWR) the chain is on the cytoplasmic side. A helical transmembrane segment spans residues 127 to 147 (FWLCVSVVYELFLIFILFQTV). Topologically, residues 148-313 (QDGRQFLKYV…EWKPASSLRR (166 aa)) are lumenal. Residue Asn181 is glycosylated (N-linked (GlcNAc...) asparagine). The helical transmembrane segment at 314–334 (WLAVCGIILVFLLAELNTFYL) threads the bilayer. Residue Lys335 is a topological domain, cytoplasmic. Residues 336-356 (FVLWMPPEHYLVLLRLVFFVN) form a helical membrane-spanning segment. Residues 357 to 376 (VGGVAMREIYDFMDDPKPHK) lie on the Lumenal side of the membrane. A helical membrane pass occupies residues 377–397 (KLGPQAWLVAAITATELLIVV). At 398-403 (KYDPHT) the chain is on the cytoplasmic side. The chain crosses the membrane as a helical span at residues 404-424 (LTLSLPFYISQCWTLGSVLAL). Residues 425–487 (TWTVWRFFLR…AEGEGAPTPN (63 aa)) lie on the Lumenal side of the membrane. Residues 451–487 (KDDQGSTVGNGDQHPLGLDEDLLGPGVAEGEGAPTPN) are disordered. Phosphothreonine is present on Thr485.

The protein belongs to the phosphatidyl serine synthase family.

Its subcellular location is the endoplasmic reticulum membrane. It catalyses the reaction a 1,2-diacyl-sn-glycero-3-phosphoethanolamine + L-serine = a 1,2-diacyl-sn-glycero-3-phospho-L-serine + ethanolamine. The catalysed reaction is 1-hexadecanoyl-2-(9Z-octadecenoyl)-sn-glycero-3-phosphoethanolamine + L-serine = 1-hexadecanoyl-2-(9Z-octadecenoyl)-sn-glycero-3-phospho-L-serine + ethanolamine. The enzyme catalyses 1-hexadecanoyl-2-(4Z,7Z,10Z,13Z,16Z,19Z-docosahexaenoyl)-sn-glycero-3-phosphoethanolamine + L-serine = 1-hexadecanoyl-2-(4Z,7Z,10Z,13Z,16Z,19Z-docosahexaenoyl)-sn-glycero-3-phosphoserine + ethanolamine. It carries out the reaction 1-octadecanoyl-2-(5Z,8Z,11Z,14Z)-eicosatetraenoyl-sn-glycero-3-phosphoethanolamine + L-serine = 1-octadecanoyl-2-(5Z,8Z,11Z,14Z)-eicosatetraenoyl-sn-glycero-3-phosphoserine + ethanolamine. It catalyses the reaction 1-octadecanoyl-2-(4Z,7Z,10Z,13Z,16Z,19Z-docosahexaenoyl)-sn-glycero-3-phosphoethanolamine + L-serine = 1-octadecanoyl-2-(4Z,7Z,10Z,13Z,16Z,19Z-docosahexaenoyl)-sn-glycero-3-phosphoserine + ethanolamine. The catalysed reaction is 1-(1Z-octadecenyl)-2-(4Z,7Z,10Z,13Z,16Z,19Z-docosahexaenoyl)-sn-glycero-3-phosphoethanolamine + L-serine = 1-(1Z-octadecenyl)-2-(4Z,7Z,10Z,13Z,16Z,19Z-docosahexaenoyl)-sn-glycero-3-phospho-L-serine + ethanolamine. The enzyme catalyses 1-octadecanoyl-2-(9Z-octadecenoyl)-sn-glycero-3-phosphoethanolamine + L-serine = 1-octadecanoyl-2-(9Z-octadecenoyl)-sn-glycero-3-phospho-L-serine + ethanolamine. It carries out the reaction 1-(1Z-octadecenyl)-2-(9Z-octadecenoyl)-sn-glycero-3-phosphoethanolamine + L-serine = 1-(1Z-octadecenyl)-2-(9Z-octadecenoyl)-sn-glycero-3-phospho-L-serine + ethanolamine. It catalyses the reaction 1-(1Z-octadecenyl)-2-(5Z,8Z,11Z,14Z- eicosatetraenoyl)-sn-glycero-3-phosphoethanolamine + L-serine = 1-(1Z-octadecenyl)-2-(5Z,8Z,11Z,14Z-eicosatetraenoyl)-sn-glycero-3-phospho-L-serine + ethanolamine. It functions in the pathway phospholipid metabolism; phosphatidylserine biosynthesis. Requires calcium ions. Inhibited by exogenous phosphatidylserine. Catalyzes a base-exchange reaction in which the polar head group of phosphatidylethanolamine (PE) or phosphatidylcholine (PC) is replaced by L-serine. Catalyzes the conversion of phosphatatidylethanolamine and does not act on phosphatidylcholine. Can utilize both phosphatidylethanolamine (PE) plasmalogen and diacyl PE as substrate and the latter is six times better utilized, indicating the importance of an ester linkage at the sn-1 position. Although it shows no sn-1 fatty acyl preference, exhibits significant preference towards docosahexaenoic acid (22:6n-3) compared with 18:1 or 20:4 at the sn-2 position. The sequence is that of Phosphatidylserine synthase 2 (PTDSS2) from Homo sapiens (Human).